The primary structure comprises 79 residues: Acyl carrier protein 1 (79 aa).

Residues 2 to 77 (DNIEQRVKKI…QAIDYARANV (76 aa)) form the Carrier domain. S37 carries the O-(pantetheine 4'-phosphoryl)serine modification.

The protein belongs to the acyl carrier protein (ACP) family. Post-translationally, 4'-phosphopantetheine is transferred from CoA to a specific serine of apo-ACP by AcpS. This modification is essential for activity because fatty acids are bound in thioester linkage to the sulfhydryl of the prosthetic group.

The protein localises to the cytoplasm. It participates in lipid metabolism; fatty acid biosynthesis. In terms of biological role, carrier of the growing fatty acid chain in fatty acid biosynthesis. The sequence is that of Acyl carrier protein 1 from Ralstonia nicotianae (strain ATCC BAA-1114 / GMI1000) (Ralstonia solanacearum).